We begin with the raw amino-acid sequence, 381 residues long: 40-kDa huntingtin-associated protein (381 aa).

Ala2 is subject to N-acetylalanine. Residues Lys34 to Arg36 carry the Nuclear localization signal motif. The interval Gln221–Ser265 is disordered. Over residues Pro226–Arg242 the composition is skewed to pro residues.

As to quaternary structure, interacts with HTT (via C-terminus). Interacts with RAB5A. Found in a complex with F8A1/F8A2/F8A3, HTT and RAB5A; mediates the recruitment of HTT by RAB5A onto early endosomes. In terms of tissue distribution, produced abundantly in a wide variety of cell types.

The protein localises to the cytoplasm. The protein resides in the nucleus. Its subcellular location is the early endosome. It localises to the nuclear body. RAB5A effector molecule that is involved in vesicular trafficking of early endosomes. Mediates the recruitment of HTT by RAB5A onto early endosomes. The HTT-F8A1/F8A2/F8A3-RAB5A complex stimulates early endosomal interaction with actin filaments and inhibits interaction with microtubules, leading to the reduction of endosome motility. This Mus musculus (Mouse) protein is 40-kDa huntingtin-associated protein (F8a1).